Here is a 110-residue protein sequence, read N- to C-terminus: Small ribosomal subunit protein bS16 (110 aa).

Residues 79–110 form a disordered region; the sequence is AAGVKKREARNNPQKAVPRKERKAQAEAAAKG.

It belongs to the bacterial ribosomal protein bS16 family.

This Bradyrhizobium diazoefficiens (strain JCM 10833 / BCRC 13528 / IAM 13628 / NBRC 14792 / USDA 110) protein is Small ribosomal subunit protein bS16.